A 338-amino-acid polypeptide reads, in one-letter code: Methionine import ATP-binding protein MetN 2 (338 aa).

The ABC transporter domain maps to 2–242 (IEIEKVCVDF…PQHAFTQQLV (241 aa)). An ATP-binding site is contributed by 39 to 46 (GTSGAGKS).

This sequence belongs to the ABC transporter superfamily. Methionine importer (TC 3.A.1.24) family. In terms of assembly, the complex is composed of two ATP-binding proteins (MetN), two transmembrane proteins (MetI) and a solute-binding protein (MetQ).

Its subcellular location is the cell inner membrane. It carries out the reaction L-methionine(out) + ATP + H2O = L-methionine(in) + ADP + phosphate + H(+). The catalysed reaction is D-methionine(out) + ATP + H2O = D-methionine(in) + ADP + phosphate + H(+). Part of the ABC transporter complex MetNIQ involved in methionine import. Responsible for energy coupling to the transport system. The sequence is that of Methionine import ATP-binding protein MetN 2 from Salmonella choleraesuis (strain SC-B67).